Here is a 146-residue protein sequence, read N- to C-terminus: Ribonuclease H (146 aa).

The RNase H type-1 domain occupies 4-145 (ELNKVVIYTD…ADMLARSQIV (142 aa)). Mg(2+) contacts are provided by Asp13, Glu51, Asp73, and Asp137.

It belongs to the RNase H family. As to quaternary structure, monomer. Requires Mg(2+) as cofactor.

Its subcellular location is the cytoplasm. The enzyme catalyses Endonucleolytic cleavage to 5'-phosphomonoester.. Its function is as follows. Endonuclease that specifically degrades the RNA of RNA-DNA hybrids. The polypeptide is Ribonuclease H (Ehrlichia chaffeensis (strain ATCC CRL-10679 / Arkansas)).